We begin with the raw amino-acid sequence, 62 residues long: Mu-conotoxin Lt5d (62 aa).

A signal peptide spans 1–22; the sequence is MRCLPVFIILLLLIPSAPSVDA. Positions 23 to 48 are excised as a propeptide; sequence QPTTKDDVPLASLHDNAKRALQMFWN.

It belongs to the conotoxin T superfamily. Contains 2 disulfide bonds that can be either 'C1-C3, C2-C4' or 'C1-C4, C2-C3', since these disulfide connectivities have been observed for conotoxins with cysteine framework V (for examples, see AC P0DQQ7 and AC P81755). As to expression, expressed by the venom duct.

It is found in the secreted. Functionally, mu-conotoxins block voltage-gated sodium channels (Nav). This toxin inhibits tetrodotoxin(TTX)-sensitive sodium channels, but does not affect TTX-resistant sodium channels. Reduces the amplitude of currents without changing the activation and inactivation kinetics of currents. The protein is Mu-conotoxin Lt5d of Conus litteratus (Lettered cone).